We begin with the raw amino-acid sequence, 142 residues long: Transcription antitermination protein NusB (142 aa).

This sequence belongs to the NusB family.

Functionally, involved in transcription antitermination. Required for transcription of ribosomal RNA (rRNA) genes. Binds specifically to the boxA antiterminator sequence of the ribosomal RNA (rrn) operons. The chain is Transcription antitermination protein NusB from Thermotoga petrophila (strain ATCC BAA-488 / DSM 13995 / JCM 10881 / RKU-1).